Reading from the N-terminus, the 202-residue chain is Recoverin (202 aa).

The N-myristoyl glycine moiety is linked to residue glycine 2. Position 39 is a cysteine sulfenic acid (-SOH) (cysteine 39). EF-hand domains lie at 41 to 59 (SGRI…FFPD), 61 to 96 (DPKA…TTAG), 97 to 132 (KPTQ…IFKM), and 147 to 182 (TPEK…NKEI). Ca(2+)-binding residues include aspartate 74, asparagine 76, aspartate 78, threonine 80, glutamate 85, aspartate 110, aspartate 112, asparagine 114, threonine 116, and glutamate 121. The segment at 189 to 192 (EPQK) is interaction with GRK1.

It belongs to the recoverin family. In terms of assembly, homodimer; disulfide-linked. Homodimerization is caused by prolonged intense illumination. May form a complex composed of RHO, GRK1 and RCVRN in a Ca(2+)-dependent manner; RCVRN prevents the interaction between GRK1 and RHO. Interacts (via C-terminus) with GRK1 (via N-terminus); the interaction is Ca(2+)-dependent. In terms of processing, the N-terminal glycine is linked to one of four different types of acyl groups. The most abundant is myristoleate (14:1), but 14:0, 14:2, and 12:0 acyl residues are also present. The Ca(2+) induced exposure of the myristoyl group, known as the calcium-myristoyl switch, promotes RCVRN binding to the photoreceptor cell membranes only when intracellular Ca(2+) concentration is high. Post-translationally, oxidation on Cys-39 occurs in response to prolonged intense illumination and results in the formation of disulfide homodimers, and to a lesser extent disulfide-linked heterodimers. Expressed in rod photoreceptors in the retina (at protein level).

The protein localises to the photoreceptor inner segment. It is found in the cell projection. The protein resides in the cilium. It localises to the photoreceptor outer segment. Its subcellular location is the photoreceptor outer segment membrane. The protein localises to the perikaryon. In terms of biological role, acts as a calcium sensor and regulates phototransduction of cone and rod photoreceptor cells. Modulates light sensitivity of cone photoreceptor in dark and dim conditions. In response to high Ca(2+) levels induced by low light levels, prolongs RHO/rhodopsin activation in rod photoreceptor cells by binding to and inhibiting GRK1-mediated phosphorylation of RHO/rhodopsin. Plays a role in scotopic vision/enhances vision in dim light by enhancing signal transfer between rod photoreceptors and rod bipolar cells. Improves rod photoreceptor sensitivity in dim light and mediates response of rod photoreceptors to facilitate detection of change and motion in bright light. This Mus musculus (Mouse) protein is Recoverin (Rcvrn).